A 401-amino-acid chain; its full sequence is Imidazolonepropionase (401 aa).

Fe(3+) is bound by residues His-66 and His-68. Residues His-66 and His-68 each contribute to the Zn(2+) site. Arg-75, Tyr-138, and His-171 together coordinate 4-imidazolone-5-propanoate. An N-formimidoyl-L-glutamate-binding site is contributed by Tyr-138. Residue His-236 coordinates Fe(3+). His-236 contributes to the Zn(2+) binding site. Gln-239 serves as a coordination point for 4-imidazolone-5-propanoate. Residue Asp-311 coordinates Fe(3+). Asp-311 lines the Zn(2+) pocket. N-formimidoyl-L-glutamate is bound by residues Asn-313 and Gly-315. Position 316 (Thr-316) interacts with 4-imidazolone-5-propanoate.

This sequence belongs to the metallo-dependent hydrolases superfamily. HutI family. Zn(2+) serves as cofactor. It depends on Fe(3+) as a cofactor.

The protein resides in the cytoplasm. It carries out the reaction 4-imidazolone-5-propanoate + H2O = N-formimidoyl-L-glutamate. Its pathway is amino-acid degradation; L-histidine degradation into L-glutamate; N-formimidoyl-L-glutamate from L-histidine: step 3/3. In terms of biological role, catalyzes the hydrolytic cleavage of the carbon-nitrogen bond in imidazolone-5-propanoate to yield N-formimidoyl-L-glutamate. It is the third step in the universal histidine degradation pathway. This Pseudomonas savastanoi pv. phaseolicola (strain 1448A / Race 6) (Pseudomonas syringae pv. phaseolicola (strain 1448A / Race 6)) protein is Imidazolonepropionase.